The chain runs to 341 residues: Anthranilate phosphoribosyltransferase (341 aa).

Residues glycine 79, 82–83 (GD), threonine 87, 89–92 (NIST), 107–115 (KHGGRSVSS), and serine 119 contribute to the 5-phospho-alpha-D-ribose 1-diphosphate site. Glycine 79 provides a ligand contact to anthranilate. Serine 91 contributes to the Mg(2+) binding site. An anthranilate-binding site is contributed by arginine 165. 2 residues coordinate Mg(2+): aspartate 224 and glutamate 225.

Belongs to the anthranilate phosphoribosyltransferase family. As to quaternary structure, homodimer. Requires Mg(2+) as cofactor.

The enzyme catalyses N-(5-phospho-beta-D-ribosyl)anthranilate + diphosphate = 5-phospho-alpha-D-ribose 1-diphosphate + anthranilate. Its pathway is amino-acid biosynthesis; L-tryptophan biosynthesis; L-tryptophan from chorismate: step 2/5. Catalyzes the transfer of the phosphoribosyl group of 5-phosphorylribose-1-pyrophosphate (PRPP) to anthranilate to yield N-(5'-phosphoribosyl)-anthranilate (PRA). The protein is Anthranilate phosphoribosyltransferase of Ruminiclostridium cellulolyticum (strain ATCC 35319 / DSM 5812 / JCM 6584 / H10) (Clostridium cellulolyticum).